Reading from the N-terminus, the 200-residue chain is Cytochrome c biogenesis ATP-binding export protein CcmA (200 aa).

The 199-residue stretch at 2-200 (LDVIELDFDY…NKADYEEYHL (199 aa)) folds into the ABC transporter domain. Position 34 to 41 (34 to 41 (GSNGAGKT)) interacts with ATP.

This sequence belongs to the ABC transporter superfamily. CcmA exporter (TC 3.A.1.107) family. The complex is composed of two ATP-binding proteins (CcmA) and two transmembrane proteins (CcmB).

The protein resides in the cell inner membrane. It carries out the reaction heme b(in) + ATP + H2O = heme b(out) + ADP + phosphate + H(+). In terms of biological role, part of the ABC transporter complex CcmAB involved in the biogenesis of c-type cytochromes; once thought to export heme, this seems not to be the case, but its exact role is uncertain. Responsible for energy coupling to the transport system. The polypeptide is Cytochrome c biogenesis ATP-binding export protein CcmA (Legionella pneumophila (strain Lens)).